A 349-amino-acid polypeptide reads, in one-letter code: N-formyl peptide receptor 3 (349 aa).

Topologically, residues M1–I27 are extracellular. Residues N4 and N10 are each glycosylated (N-linked (GlcNAc...) asparagine). The chain crosses the membrane as a helical span at residues F28 to V50. Residues A51–T61 lie on the Cytoplasmic side of the membrane. A helical transmembrane segment spans residues I62–V83. Over S84–L100 the chain is Extracellular. A disulfide bond links C98 and C176. The helical transmembrane segment at V101–L121 threads the bilayer. The Cytoplasmic portion of the chain corresponds to D122–S140. The helical transmembrane segment at L141 to I162 threads the bilayer. Over F163–H205 the chain is Extracellular. Residues F206 to A226 traverse the membrane as a helical segment. Residues K227–I242 lie on the Cytoplasmic side of the membrane. A helical transmembrane segment spans residues F243–V266. The Extracellular portion of the chain corresponds to W267–P286. The helical transmembrane segment at T287–G306 threads the bilayer. Topologically, residues H307–E349 are cytoplasmic. A disordered region spans residues E327–E349. Residues S331–S343 show a composition bias toward polar residues.

The protein belongs to the G-protein coupled receptor 1 family.

It is found in the cell membrane. Low affinity receptor for N-formyl-methionyl peptides, which are powerful neutrophils chemotactic factors. Binding of FMLP to the receptor causes activation of neutrophils. This response is mediated via a G-protein that activates a phosphatidylinositol-calcium second messenger system. In Macaca mulatta (Rhesus macaque), this protein is N-formyl peptide receptor 3 (FPR3).